A 482-amino-acid chain; its full sequence is UDP-N-acetylmuramoyl-L-alanyl-D-glutamate--2,6-diaminopimelate ligase (482 aa).

UDP-N-acetyl-alpha-D-muramoyl-L-alanyl-D-glutamate is bound by residues Leu-28 and Ser-30. 108 to 114 (GTNGKTT) lines the ATP pocket. UDP-N-acetyl-alpha-D-muramoyl-L-alanyl-D-glutamate is bound by residues 150 to 151 (TT), Ser-177, Gln-183, and Arg-185. The residue at position 217 (Lys-217) is an N6-carboxylysine. Meso-2,6-diaminopimelate is bound by residues Arg-372, 396–399 (DNPR), Gly-447, and Glu-451. Positions 396–399 (DNPR) match the Meso-diaminopimelate recognition motif motif.

It belongs to the MurCDEF family. MurE subfamily. Requires Mg(2+) as cofactor. Post-translationally, carboxylation is probably crucial for Mg(2+) binding and, consequently, for the gamma-phosphate positioning of ATP.

It localises to the cytoplasm. The catalysed reaction is UDP-N-acetyl-alpha-D-muramoyl-L-alanyl-D-glutamate + meso-2,6-diaminopimelate + ATP = UDP-N-acetyl-alpha-D-muramoyl-L-alanyl-gamma-D-glutamyl-meso-2,6-diaminopimelate + ADP + phosphate + H(+). The protein operates within cell wall biogenesis; peptidoglycan biosynthesis. In terms of biological role, catalyzes the addition of meso-diaminopimelic acid to the nucleotide precursor UDP-N-acetylmuramoyl-L-alanyl-D-glutamate (UMAG) in the biosynthesis of bacterial cell-wall peptidoglycan. This Aquifex aeolicus (strain VF5) protein is UDP-N-acetylmuramoyl-L-alanyl-D-glutamate--2,6-diaminopimelate ligase.